The primary structure comprises 284 residues: MDGIKKKMIAMKLEKENAMERAVQYEAQLKQKEEEQEKKETEIGELNNRMKQAQTELDEIQEALQDSLNKMEETDKRATNAEAEVARMTRRIRLLEEDLEVSSSRLTETLAKFDEASKTAEESERGRKELEIRSIADDEGLSQLEDQQKEGKYIAEDADRKYDEAARKLAIVEVDFERAESRLEAAESKIVELEEELRVVGNNMKALEISEQESAQREESYEETIRDLTERLKAAEQRAAEAERQVSKLQNEVDHLEDDLLSEKIRYKDLSGGLDQTFAELTGY.

The stretch at 1 to 284 (MDGIKKKMIA…DQTFAELTGY (284 aa)) forms a coiled coil. Composition is skewed to basic and acidic residues over residues 29–42 (LKQK…KETE) and 111–136 (AKFD…RSIA). 2 disordered regions span residues 29-49 (LKQK…LNNR) and 111-149 (AKFD…DQQK).

It belongs to the tropomyosin family.

In terms of biological role, tropomyosin, in association with the troponin complex, plays a central role in the calcium dependent regulation of muscle contraction. This Clonorchis sinensis (Chinese liver fluke) protein is Tropomyosin.